We begin with the raw amino-acid sequence, 287 residues long: Cbb3-type cytochrome c oxidase subunit FixPc (287 aa).

The Cytoplasmic portion of the chain corresponds to 1-36; sequence MSEKHIDEFSGVETTGHEWDGIRELNNPMPRWWVWT. A helical transmembrane segment spans residues 37-57; the sequence is FYATIVWALGYAIAYPAIPMI. Topologically, residues 58–287 are periplasmic; sequence TDATKGMLGF…IFVHSLGGGT (230 aa). Cytochrome c domains follow at residues 108-196 and 203-284; these read FAIA…WGLT and GLAE…HSLG. Heme c is bound by residues Cys-121, Cys-124, His-125, Met-173, Cys-216, Cys-219, His-220, and Met-261.

Belongs to the CcoP / FixP family. Component of the cbb3-type cytochrome c oxidase at least composed of FixN, FixO, FixQ and FixP. It depends on heme c as a cofactor.

The protein localises to the cell inner membrane. It functions in the pathway energy metabolism; oxidative phosphorylation. Its function is as follows. C-type cytochrome. Part of the cbb3-type cytochrome c oxidase complex. FixP subunit is required for transferring electrons from donor cytochrome c via its heme groups to FixO subunit. From there, electrons are shuttled to the catalytic binuclear center of FixN subunit where oxygen reduction takes place. The complex also functions as a proton pump. In Rhizobium leguminosarum bv. viciae, this protein is Cbb3-type cytochrome c oxidase subunit FixPc.